The sequence spans 253 residues: Ubiquinone biosynthesis O-methyltransferase (253 aa).

S-adenosyl-L-methionine-binding residues include R47, G78, D99, and M141.

The protein belongs to the methyltransferase superfamily. UbiG/COQ3 family.

It catalyses the reaction a 3-demethylubiquinol + S-adenosyl-L-methionine = a ubiquinol + S-adenosyl-L-homocysteine + H(+). The enzyme catalyses a 3-(all-trans-polyprenyl)benzene-1,2-diol + S-adenosyl-L-methionine = a 2-methoxy-6-(all-trans-polyprenyl)phenol + S-adenosyl-L-homocysteine + H(+). It functions in the pathway cofactor biosynthesis; ubiquinone biosynthesis. Its function is as follows. O-methyltransferase that catalyzes the 2 O-methylation steps in the ubiquinone biosynthetic pathway. The sequence is that of Ubiquinone biosynthesis O-methyltransferase from Bradyrhizobium sp. (strain ORS 278).